A 367-amino-acid chain; its full sequence is Protein TlpB (367 aa).

5 helical membrane passes run 15–35, 53–73, 83–103, 124–144, and 153–173; these read ILIS…SPYF, IIAP…GILI, IIPI…YVTF, IQAI…FFLL, and FYVV…LAPI.

The protein localises to the membrane. This Flavobacterium psychrophilum protein is Protein TlpB (tlpB).